The primary structure comprises 389 residues: Altered inheritance of mitochondria protein 6 (389 aa).

Residues Met-1–Ser-23 form the signal peptide.

Belongs to the AIM6 family.

The polypeptide is Altered inheritance of mitochondria protein 6 (AIM6) (Eremothecium gossypii (strain ATCC 10895 / CBS 109.51 / FGSC 9923 / NRRL Y-1056) (Yeast)).